A 162-amino-acid polypeptide reads, in one-letter code: ATP synthase subunit b (162 aa).

A helical membrane pass occupies residues 4–24 (INWGSIIYQLIAFCVLLWLLS).

Belongs to the ATPase B chain family. F-type ATPases have 2 components, F(1) - the catalytic core - and F(0) - the membrane proton channel. F(1) has five subunits: alpha(3), beta(3), gamma(1), delta(1), epsilon(1). F(0) has three main subunits: a(1), b(2) and c(10-14). The alpha and beta chains form an alternating ring which encloses part of the gamma chain. F(1) is attached to F(0) by a central stalk formed by the gamma and epsilon chains, while a peripheral stalk is formed by the delta and b chains.

The protein localises to the cell membrane. F(1)F(0) ATP synthase produces ATP from ADP in the presence of a proton or sodium gradient. F-type ATPases consist of two structural domains, F(1) containing the extramembraneous catalytic core and F(0) containing the membrane proton channel, linked together by a central stalk and a peripheral stalk. During catalysis, ATP synthesis in the catalytic domain of F(1) is coupled via a rotary mechanism of the central stalk subunits to proton translocation. In terms of biological role, component of the F(0) channel, it forms part of the peripheral stalk, linking F(1) to F(0). This is ATP synthase subunit b from Halalkalibacterium halodurans (strain ATCC BAA-125 / DSM 18197 / FERM 7344 / JCM 9153 / C-125) (Bacillus halodurans).